Here is a 756-residue protein sequence, read N- to C-terminus: Polyribonucleotide nucleotidyltransferase (756 aa).

Asp527 and Asp533 together coordinate Mg(2+). The KH domain maps to 593 to 652 (PRITTIKVPVDKIGEVIGPKGKMINSITEETGASISIEDDGTVFVGASNGEAAQAAIDKI). The 70-residue stretch at 664 to 733 (GERFLGTVVK…NRGKISLVLV (70 aa)) folds into the S1 motif domain.

It belongs to the polyribonucleotide nucleotidyltransferase family. It depends on Mg(2+) as a cofactor.

The protein resides in the cytoplasm. The enzyme catalyses RNA(n+1) + phosphate = RNA(n) + a ribonucleoside 5'-diphosphate. In terms of biological role, involved in mRNA degradation. Catalyzes the phosphorolysis of single-stranded polyribonucleotides processively in the 3'- to 5'-direction. The chain is Polyribonucleotide nucleotidyltransferase from Mycolicibacterium gilvum (strain PYR-GCK) (Mycobacterium gilvum (strain PYR-GCK)).